Reading from the N-terminus, the 306-residue chain is Dihydroorotate dehydrogenase B (NAD(+)), catalytic subunit (306 aa).

Residues Ser-24 and 48 to 49 contribute to the FMN site; that span reads KA. Substrate-binding positions include Lys-48 and 72–76; that span reads NAIGL. FMN is bound by residues Asn-102 and Asn-130. Residue Asn-130 participates in substrate binding. The Nucleophile role is filled by Cys-133. Lys-168 and Ile-194 together coordinate FMN. Residue 195-196 coordinates substrate; that stretch reads NT. Residues Gly-220, 246–247, and 268–269 each bind FMN; these read GG and GT.

It belongs to the dihydroorotate dehydrogenase family. Type 1 subfamily. In terms of assembly, heterotetramer of 2 PyrK and 2 PyrD type B subunits. The cofactor is FMN.

It is found in the cytoplasm. It catalyses the reaction (S)-dihydroorotate + NAD(+) = orotate + NADH + H(+). The protein operates within pyrimidine metabolism; UMP biosynthesis via de novo pathway; orotate from (S)-dihydroorotate (NAD(+) route): step 1/1. In terms of biological role, catalyzes the conversion of dihydroorotate to orotate with NAD(+) as electron acceptor. In Malacoplasma penetrans (strain HF-2) (Mycoplasma penetrans), this protein is Dihydroorotate dehydrogenase B (NAD(+)), catalytic subunit (pyrD).